A 711-amino-acid chain; its full sequence is Receptor-like protein 43 (711 aa).

Positions 1 to 30 (MKGFWNSKSTIRITLSFIFLFISQFSDVLA) are cleaved as a signal peptide. Residues 31-666 (APTRHLCRPE…EDEEVISWIA (636 aa)) lie on the Extracellular side of the membrane. Asn78, Asn114, Asn143, Asn167, and Asn191 each carry an N-linked (GlcNAc...) asparagine glycan. 8 LRR repeats span residues 120-143 (LHFL…SIEN), 144-168 (LSHL…IGNL), 170-192 (HLTF…IGNL), 193-216 (SHLT…IGGL), 218-240 (HLTT…IGNL), 241-266 (SNLT…NLSQ), 268-288 (TRLD…LWTL), and 289-316 (PNLF…SMGH). Asn239, Asn242, Asn252, and Asn263 each carry an N-linked (GlcNAc...) asparagine glycan. Asn295, Asn323, Asn347, Asn362, and Asn372 each carry an N-linked (GlcNAc...) asparagine glycan. The LRR 9; degenerate repeat unit spans residues 317–334 (LLGSNNNFTGKIPSFICE). LRR repeat units follow at residues 335–358 (LRSL…CMGN), 360–384 (KSNL…IFEI), 386–406 (RSLD…LRFF), 407–430 (STLE…LTSL), 431–452 (PKLQ…EASF), 453–476 (LKLR…YFVK), 519–543 (LTIY…IGLL), 544–567 (KELL…MGKL), 568–591 (TALE…IGNL), and 593–616 (FLSC…QFLT). Asn420 is a glycosylation site (N-linked (GlcNAc...) asparagine). A glycan (N-linked (GlcNAc...) asparagine) is linked at Asn466. Residues Asn550, Asn590, and Asn598 are each glycosylated (N-linked (GlcNAc...) asparagine). Residues 667-687 (AAIGFIPGIVLGLTIGYILVF) form a helical membrane-spanning segment. Over 688-711 (YKPEWFIKTFGRNNCRRRSTTTTH) the chain is Cytoplasmic.

It belongs to the RLP family.

The protein resides in the cell membrane. This chain is Receptor-like protein 43, found in Arabidopsis thaliana (Mouse-ear cress).